The sequence spans 206 residues: Large ribosomal subunit protein uL4 (206 aa).

Residues 46-89 (GNRAQKTRAEVKHSTKKPWRQKGTGRARSGMTSSPLWRKGGRAF) are disordered. Basic residues predominate over residues 59–70 (STKKPWRQKGTG).

The protein belongs to the universal ribosomal protein uL4 family. Part of the 50S ribosomal subunit.

Functionally, one of the primary rRNA binding proteins, this protein initially binds near the 5'-end of the 23S rRNA. It is important during the early stages of 50S assembly. It makes multiple contacts with different domains of the 23S rRNA in the assembled 50S subunit and ribosome. Its function is as follows. Forms part of the polypeptide exit tunnel. This chain is Large ribosomal subunit protein uL4, found in Neisseria gonorrhoeae (strain NCCP11945).